The chain runs to 607 residues: Chaperone protein HtpG (607 aa).

The a; substrate-binding stretch occupies residues 1 to 323; that stretch reads MKKEEKIFKA…CDSLSLNISR (323 aa). The b stretch occupies residues 324–534; sequence EILQQNAELQ…KGGLSLEMEK (211 aa). The c stretch occupies residues 535 to 607; it reads TLSEMTNNND…FIKNLNSLIK (73 aa).

The protein belongs to the heat shock protein 90 family. As to quaternary structure, homodimer.

Its subcellular location is the cytoplasm. Its function is as follows. Molecular chaperone. Has ATPase activity. In Fusobacterium nucleatum subsp. nucleatum (strain ATCC 25586 / DSM 15643 / BCRC 10681 / CIP 101130 / JCM 8532 / KCTC 2640 / LMG 13131 / VPI 4355), this protein is Chaperone protein HtpG.